We begin with the raw amino-acid sequence, 338 residues long: Lipoyl synthase (338 aa).

The segment at 1–22 (MTTVQEAVPNLIPTQDVTPRPA) is disordered. Residues C84, C89, C95, C110, C114, C117, and S324 each coordinate [4Fe-4S] cluster. Residues 96–313 (FSGGTATFMI…AEEGYKMGFK (218 aa)) enclose the Radical SAM core domain.

The protein belongs to the radical SAM superfamily. Lipoyl synthase family. [4Fe-4S] cluster serves as cofactor.

The protein resides in the cytoplasm. The catalysed reaction is [[Fe-S] cluster scaffold protein carrying a second [4Fe-4S](2+) cluster] + N(6)-octanoyl-L-lysyl-[protein] + 2 oxidized [2Fe-2S]-[ferredoxin] + 2 S-adenosyl-L-methionine + 4 H(+) = [[Fe-S] cluster scaffold protein] + N(6)-[(R)-dihydrolipoyl]-L-lysyl-[protein] + 4 Fe(3+) + 2 hydrogen sulfide + 2 5'-deoxyadenosine + 2 L-methionine + 2 reduced [2Fe-2S]-[ferredoxin]. Its pathway is protein modification; protein lipoylation via endogenous pathway; protein N(6)-(lipoyl)lysine from octanoyl-[acyl-carrier-protein]: step 2/2. Functionally, catalyzes the radical-mediated insertion of two sulfur atoms into the C-6 and C-8 positions of the octanoyl moiety bound to the lipoyl domains of lipoate-dependent enzymes, thereby converting the octanoylated domains into lipoylated derivatives. The protein is Lipoyl synthase of Pseudomonas entomophila (strain L48).